We begin with the raw amino-acid sequence, 70 residues long: Beta-defensin 43 (70 aa).

The N-terminal stretch at 1 to 22 (MRLLLSILGVLTLLSILPLARS) is a signal peptide. Disulfide bonds link cysteine 29/cysteine 57 and cysteine 36/cysteine 50.

Belongs to the beta-defensin family.

The protein localises to the secreted. Functionally, has bactericidal activity. This chain is Beta-defensin 43 (Defb43), found in Rattus norvegicus (Rat).